The following is a 280-amino-acid chain: MRIAFTKMHGNGNDFVLIDEFEGVIVGEEEKPRFVRAVCHRNFGVGADGALFVQPSQKADVRFRYFNSDGSEAAMCGNGIRCFSRYVVEEGYAGERLRVETLAGILELEVKRENGWWVKVDMGKPKFGREEIPAKTDVWGYEVEHDGRKFRIYAANTGVPHVAVFVDSLDFDIVPLARKIRYSEIFPEGTNVNFAKVDGDTITVRTYERGVEGETLSCGTGSVAVAAIANRLGLTGSKVDVVTKGGLLKIELTEDTAYMTGGASRVFDGILRLNELRYDI.

The substrate site is built by Asn-13 and Asn-67. Catalysis depends on Cys-76, which acts as the Proton donor. Substrate contacts are provided by residues 77 to 78, Asn-191, and 208 to 209; these read GN and ER. Residue Cys-218 is the Proton acceptor of the active site. Residue 219–220 participates in substrate binding; sequence GT.

It belongs to the diaminopimelate epimerase family. Homodimer.

The protein resides in the cytoplasm. It catalyses the reaction (2S,6S)-2,6-diaminopimelate = meso-2,6-diaminopimelate. The protein operates within amino-acid biosynthesis; L-lysine biosynthesis via DAP pathway; DL-2,6-diaminopimelate from LL-2,6-diaminopimelate: step 1/1. In terms of biological role, catalyzes the stereoinversion of LL-2,6-diaminopimelate (L,L-DAP) to meso-diaminopimelate (meso-DAP), a precursor of L-lysine. The sequence is that of Diaminopimelate epimerase from Archaeoglobus fulgidus (strain ATCC 49558 / DSM 4304 / JCM 9628 / NBRC 100126 / VC-16).